Reading from the N-terminus, the 321-residue chain is Probable membrane-associated kinase regulator 3 (321 aa).

Residues 297 to 314 (KSNVTESELCSSRTSVST) show a composition bias toward polar residues. Residues 297–321 (KSNVTESELCSSRTSVSTCGDLDKD) are disordered.

The protein resides in the cell membrane. The sequence is that of Probable membrane-associated kinase regulator 3 (MAKR3) from Arabidopsis thaliana (Mouse-ear cress).